The following is a 461-amino-acid chain: Alpha-L-fucosidase (461 aa).

The first 18 residues, 1–18 (MKMIIIFFILLILNLIKS), serve as a signal peptide directing secretion.

Belongs to the glycosyl hydrolase 29 family.

The catalysed reaction is an alpha-L-fucoside + H2O = L-fucose + an alcohol. Its function is as follows. Alpha-L-fucosidase is responsible for hydrolyzing the alpha-1,6-linked fucose joined to the reducing-end N-acetylglucosamine of the carbohydrate moieties of glycoproteins. The chain is Alpha-L-fucosidase (alfA) from Dictyostelium discoideum (Social amoeba).